The primary structure comprises 496 residues: Ammonium transporter 1 member 2 (496 aa).

The next 11 helical transmembrane spans lie at 39 to 59 (LLFS…LCAG), 74 to 94 (VLDA…FAFG), 120 to 140 (FFLF…GSIA), 148 to 168 (YLIY…HWIW), 192 to 212 (FAGS…GALI), 236 to 256 (LVVL…PGSF), 274 to 296 (SAVG…TTLF), 307 to 327 (VIDV…GCSV), 331 to 351 (WAAI…NALA), 360 to 380 (LEAA…TALF), and 412 to 432 (IVVI…LFLV).

It belongs to the ammonia transporter channel (TC 1.A.11.2) family. As to expression, expressed in exodermis, sclerenchyma, endodermis and pericycle cells of primary root tips.

It is found in the membrane. Functionally, ammonium transporter probably involved in ammonium uptake from the soil and ammonium uptake and retrieval in the vascular system. The polypeptide is Ammonium transporter 1 member 2 (AMT1-2) (Oryza sativa subsp. japonica (Rice)).